We begin with the raw amino-acid sequence, 616 residues long: GDP-Man:Man(3)GlcNAc(2)-PP-Dol alpha-1,2-mannosyltransferase (616 aa).

A topological domain (lumenal) is located at residue M1. The helical transmembrane segment at 2–21 (GYLVVIGVIACVAYGILQVV) threads the bilayer. Over 22-199 (STVLPRLLLV…RLIDGDYWKR (178 aa)) the chain is Cytoplasmic. Positions 200–220 (FTLIGQLFGSMVLSWEAMFEL) form an intramembrane region, helical. Topologically, residues 221 to 460 (SPDVWIDTIG…FGLNAMWNEH (240 aa)) are cytoplasmic. Positions 461 to 481 (FGIGVVEYMSRGVIPLCHASA) form an intramembrane region, helical. Residues 482–616 (GPLLDIVTNW…ERRSGIEKVY (135 aa)) lie on the Cytoplasmic side of the membrane.

The protein belongs to the glycosyltransferase group 1 family.

It localises to the endoplasmic reticulum membrane. It carries out the reaction an alpha-D-Man-(1-&gt;3)-[alpha-D-Man-(1-&gt;6)]-beta-D-Man-(1-&gt;4)-beta-D-GlcNAc-(1-&gt;4)-alpha-D-GlcNAc-diphospho-di-trans,poly-cis-dolichol + 2 GDP-alpha-D-mannose = an alpha-D-Man-(1-&gt;2)-alpha-D-Man-(1-&gt;2)-alpha-D-Man-(1-&gt;3)-[alpha-D-Man-(1-&gt;6)]-beta-D-Man-(1-&gt;4)-beta-D-GlcNAc-(1-&gt;4)-alpha-D-GlcNAc-diphospho-di-trans,poly-cis-dolichol + 2 GDP + 2 H(+). The protein operates within protein modification; protein glycosylation. Its function is as follows. GDP-Man:Man(3)GlcNAc(2)-PP-Dol alpha-1,2-mannosyltransferase that operates in the biosynthetic pathway of dolichol-linked oligosaccharides, the glycan precursors employed in protein asparagine (N)-glycosylation. The assembly of dolichol-linked oligosaccharides begins on the cytosolic side of the endoplasmic reticulum membrane and finishes in its lumen. The sequential addition of sugars to dolichol pyrophosphate produces dolichol-linked oligosaccharides containing fourteen sugars, including two GlcNAcs, nine mannoses and three glucoses. Once assembled, the oligosaccharide is transferred from the lipid to nascent proteins by oligosaccharyltransferases. Catalyzes, on the cytoplasmic face of the endoplasmic reticulum, the addition of the fourth and fifth mannose residues to the dolichol-linked oligosaccharide chain, to produce Man(5)GlcNAc(2)-PP-dolichol core oligosaccharide. This Debaryomyces hansenii (strain ATCC 36239 / CBS 767 / BCRC 21394 / JCM 1990 / NBRC 0083 / IGC 2968) (Yeast) protein is GDP-Man:Man(3)GlcNAc(2)-PP-Dol alpha-1,2-mannosyltransferase (ALG11).